We begin with the raw amino-acid sequence, 271 residues long: Ribosomal RNA small subunit methyltransferase A (271 aa).

Residues histidine 11, leucine 13, glycine 38, glutamate 58, aspartate 86, and asparagine 101 each contribute to the S-adenosyl-L-methionine site.

This sequence belongs to the class I-like SAM-binding methyltransferase superfamily. rRNA adenine N(6)-methyltransferase family. RsmA subfamily.

It is found in the cytoplasm. The enzyme catalyses adenosine(1518)/adenosine(1519) in 16S rRNA + 4 S-adenosyl-L-methionine = N(6)-dimethyladenosine(1518)/N(6)-dimethyladenosine(1519) in 16S rRNA + 4 S-adenosyl-L-homocysteine + 4 H(+). In terms of biological role, specifically dimethylates two adjacent adenosines (A1518 and A1519) in the loop of a conserved hairpin near the 3'-end of 16S rRNA in the 30S particle. May play a critical role in biogenesis of 30S subunits. The sequence is that of Ribosomal RNA small subunit methyltransferase A from Helicobacter pylori (strain G27).